We begin with the raw amino-acid sequence, 593 residues long: NADH-quinone oxidoreductase subunit C/D (593 aa).

The segment at 1–184 (MTADTAVSIP…DPFSLTLAKQ (184 aa)) is NADH dehydrogenase I subunit C. Positions 208-593 (DYMFLNLGPN…IDFVMADVDR (386 aa)) are NADH dehydrogenase I subunit D.

In the N-terminal section; belongs to the complex I 30 kDa subunit family. It in the C-terminal section; belongs to the complex I 49 kDa subunit family. NDH-1 is composed of 13 different subunits. Subunits NuoB, CD, E, F, and G constitute the peripheral sector of the complex.

It localises to the cell inner membrane. The catalysed reaction is a quinone + NADH + 5 H(+)(in) = a quinol + NAD(+) + 4 H(+)(out). Its function is as follows. NDH-1 shuttles electrons from NADH, via FMN and iron-sulfur (Fe-S) centers, to quinones in the respiratory chain. The immediate electron acceptor for the enzyme in this species is believed to be ubiquinone. Couples the redox reaction to proton translocation (for every two electrons transferred, four hydrogen ions are translocated across the cytoplasmic membrane), and thus conserves the redox energy in a proton gradient. This is NADH-quinone oxidoreductase subunit C/D from Ectopseudomonas mendocina (strain ymp) (Pseudomonas mendocina).